The chain runs to 85 residues: Large ribosomal subunit protein bL27 (85 aa).

Residues 1-22 (MAHKKAGGSTRNGRDSESKRLG) form a disordered region.

The protein belongs to the bacterial ribosomal protein bL27 family.

The protein is Large ribosomal subunit protein bL27 of Aliivibrio fischeri (strain ATCC 700601 / ES114) (Vibrio fischeri).